We begin with the raw amino-acid sequence, 465 residues long: MLPSTIQTLTLFLTSGGVLLSLYVSASLSYLLYSDILLKFSSKITAPTMTLDCANASNVQAVNRSATKEMTFLLPEPEWTYPRLSCQGSTFQKALLISPHRFGEARGNSAPLIIREPFIACGPKECKHFALTHYAAQPGGYYNGTREDRNKLRHLISVKLGKIPTVENSIFHMAAWSGSACHDGREWTYIGVDGPDSNALIKIKYGEAYTDTYHSYANNILRTQESACNCIGGDCYLMITDGSASGISKCRFLKIREGRIIKEIFPTGRVEHTEECTCGFASNKTIECACRDNSYTAKRPFVKLNVETDTAEIRLMCTETYLDTPRPDDGSITGPCESNGDKGRGGIKGGFVHQRMASKIGRWYSRTMSKTERMGMELYVRYDGDPWTDSDALAHSGVMVSMKEPGWYSFGFEIKDKKCDVPCIGIEMVHDGGKKTWHSAATAIYCLMGSGQLLWDTVTGVDMAL.

The Intravirion portion of the chain corresponds to 1–11 (MLPSTIQTLTL). A helical transmembrane segment spans residues 12–34 (FLTSGGVLLSLYVSASLSYLLYS). The segment at 13-35 (LTSGGVLLSLYVSASLSYLLYSD) is involved in apical transport and lipid raft association. Residues 35–465 (DILLKFSSKI…DTVTGVDMAL (431 aa)) lie on the Virion surface side of the membrane. The hypervariable stalk region stretch occupies residues 38–85 (LKFSSKITAPTMTLDCANASNVQAVNRSATKEMTFLLPEPEWTYPRLS). Residues Asn-55 and Asn-63 are each glycosylated (N-linked (GlcNAc...) asparagine; by host). 8 disulfides stabilise this stretch: Cys-86–Cys-419, Cys-121–Cys-126, Cys-181–Cys-228, Cys-230–Cys-235, Cys-276–Cys-290, Cys-278–Cys-288, Cys-317–Cys-336, and Cys-423–Cys-446. A head of neuraminidase region spans residues 88-465 (GSTFQKALLI…DTVTGVDMAL (378 aa)). Arg-115 is a substrate binding site. A glycan (N-linked (GlcNAc...) asparagine; by host) is linked at Asn-143. Asp-148 (proton donor/acceptor) is an active-site residue. Residue Arg-149 coordinates substrate. Residue 274-275 (EE) coordinates substrate. N-linked (GlcNAc...) asparagine; by host glycosylation occurs at Asn-283. Arg-291 is a binding site for substrate. Residues Asp-292, Thr-296, Asp-323, Gly-343, and Gly-345 each contribute to the Ca(2+) site. Residue Arg-373 participates in substrate binding. Tyr-408 serves as the catalytic Nucleophile.

The protein belongs to the glycosyl hydrolase 34 family. As to quaternary structure, homotetramer. It depends on Ca(2+) as a cofactor. Post-translationally, N-glycosylated.

The protein resides in the virion membrane. It localises to the host apical cell membrane. It catalyses the reaction Hydrolysis of alpha-(2-&gt;3)-, alpha-(2-&gt;6)-, alpha-(2-&gt;8)- glycosidic linkages of terminal sialic acid residues in oligosaccharides, glycoproteins, glycolipids, colominic acid and synthetic substrates.. Inhibited by the neuraminidase inhibitors zanamivir (Relenza) and oseltamivir (Tamiflu). These drugs interfere with the release of progeny virus from infected cells and are effective against all influenza strains. Resistance to neuraminidase inhibitors is quite rare. Its function is as follows. Catalyzes the removal of terminal sialic acid residues from viral and cellular glycoconjugates. Cleaves off the terminal sialic acids on the glycosylated HA during virus budding to facilitate virus release. Additionally helps virus spread through the circulation by further removing sialic acids from the cell surface. These cleavages prevent self-aggregation and ensure the efficient spread of the progeny virus from cell to cell. Otherwise, infection would be limited to one round of replication. Described as a receptor-destroying enzyme because it cleaves a terminal sialic acid from the cellular receptors. May facilitate viral invasion of the upper airways by cleaving the sialic acid moieties on the mucin of the airway epithelial cells. Likely to plays a role in the budding process through its association with lipid rafts during intracellular transport. May additionally display a raft-association independent effect on budding. Plays a role in the determination of host range restriction on replication and virulence. Sialidase activity in late endosome/lysosome traffic seems to enhance virus replication. This is Neuraminidase from Influenza B virus (strain B/Beijing/1/1987).